Reading from the N-terminus, the 24-residue chain is Superoxide dismutase [Cu-Zn] (24 aa).

It belongs to the Cu-Zn superoxide dismutase family. In terms of assembly, homodimer. It depends on Cu cation as a cofactor. The cofactor is Zn(2+).

The protein resides in the cytoplasm. The catalysed reaction is 2 superoxide + 2 H(+) = H2O2 + O2. Its function is as follows. Destroys radicals which are normally produced within the cells and which are toxic to biological systems. The protein is Superoxide dismutase [Cu-Zn] (sod1) of Aquarana catesbeiana (American bullfrog).